A 390-amino-acid polypeptide reads, in one-letter code: Phosphopentomutase (390 aa).

Residues Asp-10, Asp-284, His-289, Asp-325, His-326, and His-337 each contribute to the Mn(2+) site.

Belongs to the phosphopentomutase family. Mn(2+) is required as a cofactor.

The protein localises to the cytoplasm. The catalysed reaction is 2-deoxy-alpha-D-ribose 1-phosphate = 2-deoxy-D-ribose 5-phosphate. It carries out the reaction alpha-D-ribose 1-phosphate = D-ribose 5-phosphate. It functions in the pathway carbohydrate degradation; 2-deoxy-D-ribose 1-phosphate degradation; D-glyceraldehyde 3-phosphate and acetaldehyde from 2-deoxy-alpha-D-ribose 1-phosphate: step 1/2. In terms of biological role, isomerase that catalyzes the conversion of deoxy-ribose 1-phosphate (dRib-1-P) and ribose 1-phosphate (Rib-1-P) to deoxy-ribose 5-phosphate (dRib-5-P) and ribose 5-phosphate (Rib-5-P), respectively. This Clostridioides difficile (strain 630) (Peptoclostridium difficile) protein is Phosphopentomutase.